A 139-amino-acid polypeptide reads, in one-letter code: HTH-type transcriptional repressor Mb2911 (139 aa).

The region spanning 6–138 (DAPLGYLLYR…FKRMLEKLGS (133 aa)) is the HTH marR-type domain.

In terms of assembly, homodimer.

Its function is as follows. Represses expression of the HQNO methyltransferase htm gene by binding to its promoter region. This chain is HTH-type transcriptional repressor Mb2911, found in Mycobacterium bovis (strain ATCC BAA-935 / AF2122/97).